Consider the following 317-residue polypeptide: Cytochrome f (317 aa).

The signal sequence occupies residues 1–34 (MINFKKQIMKKTTFFLCAMLLVSSILIAPRSSLA). Y35, C55, C58, and H59 together coordinate heme. Residues 284 to 304 (IIGLIAFFIGVGLTQILLVLK) form a helical membrane-spanning segment.

Belongs to the cytochrome f family. In terms of assembly, the 4 large subunits of the cytochrome b6-f complex are cytochrome b6, subunit IV (17 kDa polypeptide, PetD), cytochrome f and the Rieske protein, while the 4 small subunits are PetG, PetL, PetM and PetN. The complex functions as a dimer. Requires heme as cofactor.

The protein resides in the cellular thylakoid membrane. In terms of biological role, component of the cytochrome b6-f complex, which mediates electron transfer between photosystem II (PSII) and photosystem I (PSI), cyclic electron flow around PSI, and state transitions. The sequence is that of Cytochrome f from Prochlorococcus marinus (strain MIT 9515).